The primary structure comprises 108 residues: Thioredoxin (108 aa).

Residues 2 to 108 enclose the Thioredoxin domain; that stretch reads GKYFEATDKN…IAKKIDEHIG (107 aa). Cys32 and Cys35 form a disulfide bridge.

It belongs to the thioredoxin family.

Functionally, participates in various redox reactions through the reversible oxidation of its active center dithiol to a disulfide and catalyzes dithiol-disulfide exchange reactions. This chain is Thioredoxin (trxA), found in Chlorobaculum thiosulfatiphilum (Chlorobium limicola f.sp. thiosulfatophilum).